A 423-amino-acid polypeptide reads, in one-letter code: Phosphoribosylamine--glycine ligase (423 aa).

In terms of domain architecture, ATP-grasp spans 107–312 (KAFADRYGLP…LVPYLVACAN (206 aa)). 133 to 193 (LELFEPPYVI…EEFLEGEIGS (61 aa)) is a binding site for ATP. Positions 270, 282, and 284 each coordinate Mg(2+). Residues glutamate 270, glutamate 282, and asparagine 284 each contribute to the Mn(2+) site.

This sequence belongs to the GARS family. Mg(2+) is required as a cofactor. It depends on Mn(2+) as a cofactor.

The enzyme catalyses 5-phospho-beta-D-ribosylamine + glycine + ATP = N(1)-(5-phospho-beta-D-ribosyl)glycinamide + ADP + phosphate + H(+). It participates in purine metabolism; IMP biosynthesis via de novo pathway; N(1)-(5-phospho-D-ribosyl)glycinamide from 5-phospho-alpha-D-ribose 1-diphosphate: step 2/2. This chain is Phosphoribosylamine--glycine ligase, found in Phenylobacterium zucineum (strain HLK1).